We begin with the raw amino-acid sequence, 509 residues long: Heat shock 70 kDa protein 14-A (509 aa).

The protein belongs to the heat shock protein 70 family. In terms of assembly, component of ribosome-associated complex (RAC).

Its subcellular location is the cytoplasm. It localises to the cytosol. Component of the ribosome-associated complex (RAC), a complex involved in folding or maintaining nascent polypeptides in a folding-competent state. This is Heat shock 70 kDa protein 14-A (hspa14-a) from Xenopus laevis (African clawed frog).